A 547-amino-acid chain; its full sequence is Solute carrier family 22 member 25 (547 aa).

At 1 to 9 (MAFQDLLDQ) the chain is on the cytoplasmic side. The chain crosses the membrane as a helical span at residues 10–30 (VGGLGRFQILQMVFLIMFNVI). Over 31-145 (VYHQTQLENF…DLVCESQPLN (115 aa)) the chain is Extracellular. N-linked (GlcNAc...) asparagine glycans are attached at residues Asn-56 and Asn-102. Residues 146–166 (SVAKFLFMAGMMVGGNLYGHL) traverse the membrane as a helical segment. The Cytoplasmic portion of the chain corresponds to 167 to 177 (SDRFGRKFVLR). Residues 178 to 198 (WSYLQLAIVGTCAAFAPTILV) form a helical membrane-spanning segment. Over 199-204 (YCSLRF) the chain is Extracellular. Residues 205 to 225 (LAGAATFSIIVNTVLLIVEWI) form a helical membrane-spanning segment. The Cytoplasmic segment spans residues 226 to 234 (THQFCAMAL). Residues 235 to 255 (TLTLCAASIGHITLGSLAFVI) form a helical membrane-spanning segment. The Extracellular segment spans residues 256–259 (RDQC). Residues 260–280 (ILQLVMSAPCFVFFLFSRWLA) traverse the membrane as a helical segment. The Cytoplasmic portion of the chain corresponds to 281 to 349 (ESARWLIINN…LLRIPNICKR (69 aa)). The chain crosses the membrane as a helical span at residues 350–370 (ICFLSFVRFASTIPFWGLTLH). Residues 371–377 (LQHLGNN) lie on the Extracellular side of the membrane. Residues 378–398 (VFLLQTLFGAVTLLANCVAPW) form a helical membrane-spanning segment. At 399 to 406 (ALNHMSRR) the chain is on the cytoplasmic side. A helical transmembrane segment spans residues 407 to 427 (LSQMLLMFLLATCLLAIIFVP). Topologically, residues 428-434 (QEMQTLR) are extracellular. The chain crosses the membrane as a helical span at residues 435 to 455 (VVLATLGVGAASLGITCSTAQ). Residues 456 to 470 (ENELIPSIIRGRATG) lie on the Cytoplasmic side of the membrane. A helical transmembrane segment spans residues 471-491 (ITGNFANIGGALASLMMILSI). Residues 492 to 494 (YSR) lie on the Extracellular side of the membrane. The helical transmembrane segment at 495-515 (PLPWIIYGVFAILSGLVVLLL) threads the bilayer. Topologically, residues 516 to 547 (PETRNQPLLDSIQDVENEGVNSLAAPQRSSVL) are cytoplasmic.

It belongs to the major facilitator (TC 2.A.1) superfamily. Organic cation transporter (TC 2.A.1.19) family. As to expression, expressed exclusively in liver in both embryo and adult.

It localises to the membrane. The chain is Solute carrier family 22 member 25 from Homo sapiens (Human).